We begin with the raw amino-acid sequence, 1173 residues long: WASH complex subunit 4 (1173 aa).

Position 2 is an N-acetylalanine (Ala2). Residue Ser7 is modified to Phosphoserine. Positions 705–1173 (KDLALFFSLN…STVSADPVVK (469 aa)) are sufficient for interaction with WASHC5. Residues 1135–1161 (RADKTAAEENQEKKEKEEETKTSNGDL) are a coiled coil. The segment covering 1142–1155 (EENQEKKEKEEETK) has biased composition (basic and acidic residues). The interval 1142–1173 (EENQEKKEKEEETKTSNGDLSDSTVSADPVVK) is disordered. Position 1154 is a phosphothreonine (Thr1154). A compositionally biased stretch (polar residues) spans 1157-1167 (SNGDLSDSTVS).

It belongs to the SWIP family. As to quaternary structure, component of the WASH core complex also described as WASH regulatory complex (SHRC) composed of WASH (WASHC1, WASH2P or WASH3P), WASHC2 (WASHC2A or WASHC2C), WASHC3, WASHC4 and WASHC5. The WASH core complex associates via WASHC2 with the F-actin-capping protein dimer (formed by CAPZA1, CAPZA2 or CAPZA3 and CAPZB) in a transient or substoichiometric manner which was initially described as WASH complex.

It localises to the early endosome. Its function is as follows. Acts as a component of the WASH core complex that functions as a nucleation-promoting factor (NPF) at the surface of endosomes, where it recruits and activates the Arp2/3 complex to induce actin polymerization, playing a key role in the fission of tubules that serve as transport intermediates during endosome sorting. The sequence is that of WASH complex subunit 4 from Homo sapiens (Human).